Here is a 343-residue protein sequence, read N- to C-terminus: Vancomycin/teicoplanin A-type resistance protein VanA (343 aa).

Residues Lys-133, 169–171, 177–178, 207–214, and Phe-241 contribute to the ATP site; these read FVK, SS, and EQAVSGCE. Residues 137-338 form the ATP-grasp domain; the sequence is YIVAKNAGIA…LPELIDRLIV (202 aa). His-244 contributes to the substrate binding site. ATP is bound at residue 304-305; the sequence is NE. Mg(2+)-binding residues include Glu-305 and Asn-307.

Belongs to the D-alanine--D-alanine ligase family. Mg(2+) is required as a cofactor. Requires Mn(2+) as cofactor.

Its subcellular location is the cell membrane. The catalysed reaction is (R)-lactate + D-alanine + ATP = D-alanyl-(R)-lactate + ADP + phosphate. Its function is as follows. Required for high-level resistance to glycopeptide antibiotics. D-Ala--D-Ala ligase of altered specificity which catalyzes ester bond formation between D-Ala and various D-hydroxy acids; produces a peptidoglycan which does not terminate in D-alanine but in D-lactate, thus preventing vancomycin or teicoplanin binding. In Enterococcus faecium (Streptococcus faecium), this protein is Vancomycin/teicoplanin A-type resistance protein VanA (vanA).